Reading from the N-terminus, the 129-residue chain is NADPH-dependent 7-cyano-7-deazaguanine reductase (129 aa).

Residue cysteine 34 is the Thioimide intermediate of the active site. Aspartate 41 (proton donor) is an active-site residue. Substrate is bound by residues 56 to 58 and 75 to 76; these read VEL and HE.

Belongs to the GTP cyclohydrolase I family. QueF type 1 subfamily.

Its subcellular location is the cytoplasm. It carries out the reaction 7-aminomethyl-7-carbaguanine + 2 NADP(+) = 7-cyano-7-deazaguanine + 2 NADPH + 3 H(+). It functions in the pathway tRNA modification; tRNA-queuosine biosynthesis. Catalyzes the NADPH-dependent reduction of 7-cyano-7-deazaguanine (preQ0) to 7-aminomethyl-7-deazaguanine (preQ1). The polypeptide is NADPH-dependent 7-cyano-7-deazaguanine reductase (Alkalilimnicola ehrlichii (strain ATCC BAA-1101 / DSM 17681 / MLHE-1)).